The chain runs to 285 residues: Diaminopimelate epimerase 2 (285 aa).

Residues N11, N63, 73-74 (GN), N158, N191, 209-210 (ER), and 219-220 (GS) each bind substrate.

The protein belongs to the diaminopimelate epimerase family. Homodimer.

The protein resides in the cytoplasm. It carries out the reaction (2S,6S)-2,6-diaminopimelate = meso-2,6-diaminopimelate. It functions in the pathway amino-acid biosynthesis; L-lysine biosynthesis via DAP pathway; DL-2,6-diaminopimelate from LL-2,6-diaminopimelate: step 1/1. Functionally, catalyzes the stereoinversion of LL-2,6-diaminopimelate (L,L-DAP) to meso-diaminopimelate (meso-DAP), a precursor of L-lysine and an essential component of the bacterial peptidoglycan. The protein is Diaminopimelate epimerase 2 of Nostoc sp. (strain PCC 7120 / SAG 25.82 / UTEX 2576).